Reading from the N-terminus, the 222-residue chain is MKFFIDTASLDEIKAANELGVLDGVTTNPSLIAKIVKDPANFTYADFKAHIKKICDIVDGPVSAEVTTLKAEEMIAQGEELAAIHENVVIKCPLTVEGLKAIKHFSSNGIKTNATLVFSPTQALLAAKAGADFVSPFVGRLDDISTNGMELVKQIVTIYDNYGYLTEVIVASVRNPLHVVESAMVGADIATIPYSVIKQLANHPLTDKGLEKFMEDAGVMKP.

Residue K91 is the Schiff-base intermediate with substrate of the active site.

Belongs to the transaldolase family. Type 3B subfamily.

Its subcellular location is the cytoplasm. The enzyme catalyses D-sedoheptulose 7-phosphate + D-glyceraldehyde 3-phosphate = D-erythrose 4-phosphate + beta-D-fructose 6-phosphate. It functions in the pathway carbohydrate degradation; pentose phosphate pathway; D-glyceraldehyde 3-phosphate and beta-D-fructose 6-phosphate from D-ribose 5-phosphate and D-xylulose 5-phosphate (non-oxidative stage): step 2/3. In terms of biological role, transaldolase is important for the balance of metabolites in the pentose-phosphate pathway. The polypeptide is Probable transaldolase (Chlorobaculum parvum (strain DSM 263 / NCIMB 8327) (Chlorobium vibrioforme subsp. thiosulfatophilum)).